We begin with the raw amino-acid sequence, 1052 residues long: MSAILPGYAELHCQSNFSFLQGASHPEELVTRAGELGYAALALTDECSLAGVVRAHVEAREQKLPLIIGSSFTLQAGADAPPLDLTLLAQNREGYGNLAELITLGRGRAAKGQYLLTPADIEAPAGDNAHLRGMPDCLAILAPPPGLAAERLAEQARWLAAQCPGRAWIGLTLLHHCRDDLHRAAVEHAAHASGLPIVALGQAQMHRRSRKPLHDTLAAIRTGRSVGQCGYDLAANAERHLRSRLRLASLYPAQALAQTLAIARRCTFSLDELQYEYPDEIVPAGHTPASYLRQQTYLGARQRFPEGMTPAVAAQVEKELALINELRYEAYFLTVYDIVGYARSQGILCQGRGSAANSAVCYCLGITAVDPARGNTLFERFISKERNEPPDIDVDFEHQRREEVIQYIYEKYGRQRAALTAVVISYRPRSVLRDTGRALGVDNGIIDAVARAHQWWDGKKEMLRSLAACGLDPASRVARQWAELAETLMGFPRHLSQHPGGFVISRGKLSRLVPIENAAMPGRSVVQWDKDDLDALRLLKVDVLALGMLSVLRRALALAGQRRGRPLALHEIPPDDDATYDMICAADTIGVFQIESRAQMSMLPRLRPRQYYDLVVQVAIVRPGPIQGGMVHPYLRRRQGREDITYPGPAVRKALARTLGVPIFQEQVMQIAVDAAGFTPGEADALRRSMAAWRRKGGVDKFRAQLVGGLLARNYTADFAQALFRQIEGFGEYGFPESHAASFALLAYASSWLKCHEPEAFLAALLNSQPMGFYAPAQLVQDARRHGVRVLPADVLYSGWEASLQDAPGAARPAVRLGLNLVKGLREDSARAIEQARVRRPFADTADMARRAGLPRQALDALAAADALRTLAGHRRLASWQAAASAQSRDLLREAVIVETETPALPAPSEGQTVAADYRSVGLTLGRHPLALLRPQLAARNFQTAAVLNTYPNRRLARACGIVTVRQRPQTAKGTIFVTLEDETGPINAVVRPELIERQRRELLDATLLGIYGTWQSVDGVRHLVAQRLVDLSSLLGQLSQDGLAAASRNFH.

The protein belongs to the DNA polymerase type-C family. DnaE2 subfamily.

It is found in the cytoplasm. The catalysed reaction is DNA(n) + a 2'-deoxyribonucleoside 5'-triphosphate = DNA(n+1) + diphosphate. Functionally, DNA polymerase involved in damage-induced mutagenesis and translesion synthesis (TLS). It is not the major replicative DNA polymerase. The polypeptide is Error-prone DNA polymerase (Bordetella bronchiseptica (strain ATCC BAA-588 / NCTC 13252 / RB50) (Alcaligenes bronchisepticus)).